The following is a 512-amino-acid chain: Histidine ammonia-lyase (512 aa).

Residues 142 to 144 (ASG) constitute a cross-link (5-imidazolinone (Ala-Gly)). The residue at position 143 (serine 143) is a 2,3-didehydroalanine (Ser).

It belongs to the PAL/histidase family. Contains an active site 4-methylidene-imidazol-5-one (MIO), which is formed autocatalytically by cyclization and dehydration of residues Ala-Ser-Gly.

Its subcellular location is the cytoplasm. The catalysed reaction is L-histidine = trans-urocanate + NH4(+). It functions in the pathway amino-acid degradation; L-histidine degradation into L-glutamate; N-formimidoyl-L-glutamate from L-histidine: step 1/3. The protein is Histidine ammonia-lyase of Allorhizobium ampelinum (strain ATCC BAA-846 / DSM 112012 / S4) (Agrobacterium vitis (strain S4)).